Here is a 2176-residue protein sequence, read N- to C-terminus: Methyl-CpG-binding domain-containing protein 9 (2176 aa).

The span at 1-13 (MEPTDSTNEQLGD) shows a compositional bias: polar residues. Disordered regions lie at residues 1–20 (MEPT…AAVK) and 28–85 (GIDL…RDAS). A PHD-type 1 zinc finger spans residues 83–133 (DASCGACGRPESIELVVVCDACERGFHMSCVNDGVEAAPSADWMCSDCRTG). An RING-type 1; degenerate zinc finger spans residues 86 to 131 (CGACGRPESIELVVVCDACERGFHMSCVNDGVEAAPSADWMCSDCR). Residues 258 to 327 (RHFISERHGV…MDAEIRNENS (70 aa)) form the MBD domain. Positions 403–456 (GCPMQFEDFFVLSLGRIDIRQSYHNVNVIYPIGYKSCWHDKITGSLFTCEVSDG) constitute an FYR N-terminal domain. A coiled-coil region spans residues 491 to 511 (EQNSDKLSNRRDSTQERDDDA). Positions 550–698 (SSRVDFDKNL…ESCTNYRTLK (149 aa)) constitute an FYR C-terminal domain. 3 short sequence motifs (nuclear localization signal) span residues 914 to 921 (SRRGRKKD), 1124 to 1131 (KKRTYISV), and 1256 to 1263 (YRKLECLS). Residues 1098 to 1137 (PTKKAVLSLLADIRGGDLVQRSIKGTKKRTYISVSDVIMK) form a Pumilio repeat. The Bromo domain occupies 1130–1245 (SVSDVIMKKC…EKFKSLYEAE (116 aa)). Residues 1251–1273 (QKLKDYRKLECLSAEMKKEIKDI) are a coiled coil. A PHD-type 2 zinc finger spans residues 1287-1337 (EGVCKVCGVDKDDDSVLLCDTCDAEYHTYCLNPPLIRIPDGNWYCPSCVIA). The RING-type 2; degenerate zinc finger occupies 1290-1335 (CKVCGVDKDDDSVLLCDTCDAEYHTYCLNPPLIRIPDGNWYCPSCV). Positions 1337–1344 (AKRMAQEA) match the Nuclear localization signal motif. Residues 1410-1437 (QHLEQCAEAIIEMQQKLRSLSSEWKNAK) are a coiled coil. Disordered regions lie at residues 1472–1553 (GCDP…NLPE) and 1565–1595 (GRNH…QELQ). Composition is skewed to polar residues over residues 1492–1513 (SSTA…TQPG), 1523–1532 (KISSPETISS), and 1585–1595 (DASSQASQELQ). Residues 1588-1628 (SQASQELQACQQDLSATSNEIQNLQQSIRSIESQLLKQSIR) are a coiled coil. The Nuclear localization signal signature appears at 1761-1768 (EKRYGPCI). Residues 2136–2176 (IDETKPIISLPDQKSQPVSDSQERSSRVRRSGKKRKEPEGS) are disordered.

As to quaternary structure, interacts with histone H4. In terms of tissue distribution, expressed in leaves, buds, flowers and stems.

Its subcellular location is the nucleus. The catalysed reaction is L-lysyl-[protein] + acetyl-CoA = N(6)-acetyl-L-lysyl-[protein] + CoA + H(+). Functionally, probable transcriptional regulator that acts as a histone acetyltransferase. Mediates the acetylation of histone H3 and H4 of target loci (e.g. FLC). Involved in an auxin-independent regulation of shoot branching and flowering time. This Arabidopsis thaliana (Mouse-ear cress) protein is Methyl-CpG-binding domain-containing protein 9 (MBD9).